The sequence spans 196 residues: Phosphoheptose isomerase (196 aa).

An SIS domain is found at 36–196 (MVACLMNEGK…AVDYMLLGGD (161 aa)). Substrate is bound at residue 51 to 53 (NGG). 2 residues coordinate Zn(2+): H60 and E64. Substrate contacts are provided by residues E64, 93 to 94 (ND), 119 to 121 (STS), S124, and Q174. Zn(2+) is bound by residues Q174 and H182.

The protein belongs to the SIS family. GmhA subfamily. Homotetramer. It depends on Zn(2+) as a cofactor.

It localises to the cytoplasm. It catalyses the reaction 2 D-sedoheptulose 7-phosphate = D-glycero-alpha-D-manno-heptose 7-phosphate + D-glycero-beta-D-manno-heptose 7-phosphate. The protein operates within carbohydrate biosynthesis; D-glycero-D-manno-heptose 7-phosphate biosynthesis; D-glycero-alpha-D-manno-heptose 7-phosphate and D-glycero-beta-D-manno-heptose 7-phosphate from sedoheptulose 7-phosphate: step 1/1. Catalyzes the isomerization of sedoheptulose 7-phosphate in D-glycero-D-manno-heptose 7-phosphate. The polypeptide is Phosphoheptose isomerase (Laribacter hongkongensis (strain HLHK9)).